Reading from the N-terminus, the 500-residue chain is L-arabinose isomerase (500 aa).

Mn(2+) contacts are provided by glutamate 306, glutamate 333, histidine 349, and histidine 448.

The protein belongs to the arabinose isomerase family. Mn(2+) is required as a cofactor.

The enzyme catalyses beta-L-arabinopyranose = L-ribulose. It participates in carbohydrate degradation; L-arabinose degradation via L-ribulose; D-xylulose 5-phosphate from L-arabinose (bacterial route): step 1/3. Functionally, catalyzes the conversion of L-arabinose to L-ribulose. The sequence is that of L-arabinose isomerase from Koribacter versatilis (strain Ellin345).